The sequence spans 468 residues: 3-isopropylmalate dehydratase large subunit (468 aa).

[4Fe-4S] cluster contacts are provided by Cys347, Cys407, and Cys410.

This sequence belongs to the aconitase/IPM isomerase family. LeuC type 1 subfamily. As to quaternary structure, heterodimer of LeuC and LeuD. [4Fe-4S] cluster serves as cofactor.

The catalysed reaction is (2R,3S)-3-isopropylmalate = (2S)-2-isopropylmalate. It participates in amino-acid biosynthesis; L-leucine biosynthesis; L-leucine from 3-methyl-2-oxobutanoate: step 2/4. Functionally, catalyzes the isomerization between 2-isopropylmalate and 3-isopropylmalate, via the formation of 2-isopropylmaleate. The protein is 3-isopropylmalate dehydratase large subunit of Prochlorococcus marinus (strain SARG / CCMP1375 / SS120).